We begin with the raw amino-acid sequence, 194 residues long: Imidazoleglycerol-phosphate dehydratase (194 aa).

Belongs to the imidazoleglycerol-phosphate dehydratase family.

The protein resides in the cytoplasm. It catalyses the reaction D-erythro-1-(imidazol-4-yl)glycerol 3-phosphate = 3-(imidazol-4-yl)-2-oxopropyl phosphate + H2O. Its pathway is amino-acid biosynthesis; L-histidine biosynthesis; L-histidine from 5-phospho-alpha-D-ribose 1-diphosphate: step 6/9. The chain is Imidazoleglycerol-phosphate dehydratase from Sulfurisphaera tokodaii (strain DSM 16993 / JCM 10545 / NBRC 100140 / 7) (Sulfolobus tokodaii).